A 273-amino-acid chain; its full sequence is 3-methyl-2-oxobutanoate hydroxymethyltransferase (273 aa).

Mg(2+) contacts are provided by D53 and D92. Residues 53 to 54 (DS), D92, and K122 each bind 3-methyl-2-oxobutanoate. Residue E124 participates in Mg(2+) binding. The active-site Proton acceptor is E191.

Belongs to the PanB family. In terms of assembly, homodecamer; pentamer of dimers. Mg(2+) serves as cofactor.

It is found in the cytoplasm. The enzyme catalyses 3-methyl-2-oxobutanoate + (6R)-5,10-methylene-5,6,7,8-tetrahydrofolate + H2O = 2-dehydropantoate + (6S)-5,6,7,8-tetrahydrofolate. Its pathway is cofactor biosynthesis; (R)-pantothenate biosynthesis; (R)-pantoate from 3-methyl-2-oxobutanoate: step 1/2. In terms of biological role, catalyzes the reversible reaction in which hydroxymethyl group from 5,10-methylenetetrahydrofolate is transferred onto alpha-ketoisovalerate to form ketopantoate. This chain is 3-methyl-2-oxobutanoate hydroxymethyltransferase, found in Phocaeicola vulgatus (strain ATCC 8482 / DSM 1447 / JCM 5826 / CCUG 4940 / NBRC 14291 / NCTC 11154) (Bacteroides vulgatus).